Consider the following 129-residue polypeptide: Nif-specific regulatory protein (129 aa).

The region spanning 1 to 46 (EFLLTKIGRQQGRPLTVTDSAIRLLMSHRWPGNVRDVENCLERSAI) is the Sigma-54 factor interaction domain. Residues 101 to 129 (QAKAARLLGMTPRQIAYRIQTLNIHMRKI) constitute a DNA-binding region (H-T-H motif).

Interacts with sigma-54.

In terms of biological role, required for activation of most nif operons, which are directly involved in nitrogen fixation. This chain is Nif-specific regulatory protein (nifA), found in Azotobacter chroococcum mcd 1.